The primary structure comprises 493 residues: Na(+)/H(+) antiporter subunit D (493 aa).

15 helical membrane passes run 3–23, 31–51, 77–97, 107–127, 129–149, 163–183, 203–223, 227–247, 251–271, 274–294, 299–319, 330–350, 370–390, 407–427, and 449–469; these read NFVI…IFMT, IFST…VQTV, FASL…LYSF, SFYY…FLTG, LFNM…LIVL, IVFN…LYAV, GLIT…GGIF, FWLP…FGAL, VGLY…TAFT, LMIW…LAYS, IVIY…AVHT, LIHD…LIAL, GWMF…SGFV, ISML…RIFI, and LYPA…TEWV.

It belongs to the CPA3 antiporters (TC 2.A.63) subunit D family. Forms a heterooligomeric complex that consists of seven subunits: MrpA, MrpB, MrpC, MrpD, MrpE, MrpF and MrpG.

The protein resides in the cell membrane. Its function is as follows. Mrp complex is a Na(+)/H(+) antiporter that is considered to be the major Na(+) excretion system in B.subtilis. Has a major role in Na(+) resistance and a minor role in Na(+)- and K(+)-dependent pH homeostasis as compared to TetB. MrpA may be the actual Na(+)/H(+) antiporter, although the six other Mrp proteins are all required for Na(+)/H(+) antiport activity and Na(+) resistance. MrpA is required for initiation of sporulation when external Na(+) concentration increases. Also transports Li(+) but not K(+), Ca(2+) or Mg(2+). This is Na(+)/H(+) antiporter subunit D (mrpD) from Bacillus subtilis (strain 168).